Reading from the N-terminus, the 1157-residue chain is ATP-dependent helicase/deoxyribonuclease subunit B (1157 aa).

Residues 1 to 275 (MTLHAYLGRA…QYFNQLYRFN (275 aa)) form the UvrD-like helicase ATP-binding domain. 8–15 (GRAGTGKS) is an ATP binding site. In terms of domain architecture, UvrD-like helicase C-terminal spans 269–583 (NQLYRFNNQD…SIGTMDLAKV (315 aa)). [4Fe-4S] cluster-binding residues include C784, C1112, C1115, and C1121.

It belongs to the helicase family. AddB/RexB type 1 subfamily. As to quaternary structure, heterodimer of AddA and AddB. Mg(2+) serves as cofactor. Requires [4Fe-4S] cluster as cofactor.

In terms of biological role, the heterodimer acts as both an ATP-dependent DNA helicase and an ATP-dependent, dual-direction single-stranded exonuclease. Recognizes the chi site generating a DNA molecule suitable for the initiation of homologous recombination. The AddB subunit has 5' -&gt; 3' nuclease activity but not helicase activity. The chain is ATP-dependent helicase/deoxyribonuclease subunit B from Staphylococcus aureus (strain JH9).